Here is a 129-residue protein sequence, read N- to C-terminus: Small ribosomal subunit protein uS11 (129 aa).

It belongs to the universal ribosomal protein uS11 family. In terms of assembly, part of the 30S ribosomal subunit. Interacts with proteins S7 and S18. Binds to IF-3.

Its function is as follows. Located on the platform of the 30S subunit, it bridges several disparate RNA helices of the 16S rRNA. Forms part of the Shine-Dalgarno cleft in the 70S ribosome. This Yersinia pseudotuberculosis serotype O:1b (strain IP 31758) protein is Small ribosomal subunit protein uS11.